The sequence spans 262 residues: Regulatory protein RecX (262 aa).

It belongs to the RecX family.

Its subcellular location is the cytoplasm. In terms of biological role, modulates RecA activity. The protein is Regulatory protein RecX of Photobacterium profundum (strain SS9).